The primary structure comprises 157 residues: Transcription elongation factor GreA (157 aa).

Residues 14–37 (LREELDRLLKLRPKITEAIAEARE) are a coiled coil.

This sequence belongs to the GreA/GreB family.

Necessary for efficient RNA polymerase transcription elongation past template-encoded arresting sites. The arresting sites in DNA have the property of trapping a certain fraction of elongating RNA polymerases that pass through, resulting in locked ternary complexes. Cleavage of the nascent transcript by cleavage factors such as GreA or GreB allows the resumption of elongation from the new 3'terminus. GreA releases sequences of 2 to 3 nucleotides. This Vibrio cholerae serotype O1 (strain ATCC 39315 / El Tor Inaba N16961) protein is Transcription elongation factor GreA.